The sequence spans 403 residues: MSTEHTNTPRADSPQSAAEAVRGARQHAPAATPAESDPILELAEAMEGPLRIPAHTPEAVRDTVASLEKRLIGGQREFRRREVASEAGVSLHSARKLWRAIGFPELSDDEVFFTEADKKALGTMVGMVREGALTEETAISLMRSVGQMTDRMVVWQIEALVEDMIANQNLSDRQARRQLFSLLPEIIPAIEDLLLYSWRRQLNSAVHRMALRVETGVAAYNQDRGEDDGGTPLPLARAVGFADLVSYTSLSRRMNERTLAQLVQRFEAKCAEIISVGGGRLVKTIGDEVLYVAETPQAGAQIALSLSRELAKDELFPQTRGAVVWGRLLSRLGDIYGPTVNMAARLTSLAEPGTVLTDAITANTLRNDARFVLTAQEITAVRGFGDIQPYELSAGEGAGLVID.

The segment covering 1 to 16 (MSTEHTNTPRADSPQS) has biased composition (polar residues). The interval 1-37 (MSTEHTNTPRADSPQSAAEAVRGARQHAPAATPAESD) is disordered. The interval 31 to 60 (ATPAESDPILELAEAMEGPLRIPAHTPEAV) is pyruvate binding. A Guanylate cyclase domain is found at 238–347 (AVGFADLVSY…PTVNMAARLT (110 aa)). Residues Asp243 and Asp287 each coordinate Mg(2+).

The protein belongs to the adenylyl cyclase class-3 family. In terms of assembly, homodimer. Mg(2+) is required as a cofactor.

It is found in the cytoplasm. The catalysed reaction is ATP = 3',5'-cyclic AMP + diphosphate. Its activity is regulated as follows. Pyruvate-stimulated. Its function is as follows. Plays essential roles in regulation of cellular metabolism by catalyzing the synthesis of a second messenger, cAMP. The protein is Adenylate cyclase (cya) of Glutamicibacter nicotianae (Arthrobacter nicotianae).